A 314-amino-acid polypeptide reads, in one-letter code: MKITLIIPTYNAGSLWPNVLDAIKQQTIYPDKLIVIDSGSKDETVPLASDLKNISIFNIDSKDFNHGGTRNLAVAKTLDADVIIFLTQDAILADSDAIKNLVYYFSDPLIAAVCGRQLPHKDANPLAVHARNFNYSSKSIVKSKADIEKLGIKTVFMSNSFAAYRRSVFEELSGFPEHTILAEDMFMAAKMIQAGYKVAYCAEAVVRHSHNYTPREEFQRYFDTGVFHACSPWIQRDFGGAGGEGFRFVKSEIQFLLKNAPFWIPRALLTTFAKFLGYKLGKHWQSLPLSTCRYFSMYKSYWNNIQYSSSKEIK.

It belongs to the glycosyltransferase 2 family.

The enzyme catalyses alpha-D-galactosyl-di-trans,octa-cis-undecaprenyl diphosphate + dTDP-beta-L-rhamnose = alpha-L-rhamnosyl-(1-&gt;3)-alpha-D-galactosyl-1-diphospho-di-trans,octa-cis-undecaprenol + dTDP + H(+). It participates in bacterial outer membrane biogenesis; LPS O-antigen biosynthesis. Its function is as follows. Rhamnosyltransferase involved in the biosynthesis of the repeat unit of the lipopolysaccharide (LPS) O-antigen region. Catalyzes the addition of a rhamnose to the galactosyl-undecaprenyl diphosphate intermediate. In Salmonella typhimurium (strain LT2 / SGSC1412 / ATCC 700720), this protein is O-antigen chain rhamnosyltransferase RfbN.